Reading from the N-terminus, the 322-residue chain is Acetyl-coenzyme A carboxylase carboxyl transferase subunit alpha (322 aa).

One can recognise a CoA carboxyltransferase C-terminal domain in the interval 40-297 (PLQKKLGDLR…RETLTRNLEE (258 aa)).

The protein belongs to the AccA family. As to quaternary structure, acetyl-CoA carboxylase is a heterohexamer composed of biotin carboxyl carrier protein (AccB), biotin carboxylase (AccC) and two subunits each of ACCase subunit alpha (AccA) and ACCase subunit beta (AccD).

The protein resides in the cytoplasm. It carries out the reaction N(6)-carboxybiotinyl-L-lysyl-[protein] + acetyl-CoA = N(6)-biotinyl-L-lysyl-[protein] + malonyl-CoA. The protein operates within lipid metabolism; malonyl-CoA biosynthesis; malonyl-CoA from acetyl-CoA: step 1/1. Its function is as follows. Component of the acetyl coenzyme A carboxylase (ACC) complex. First, biotin carboxylase catalyzes the carboxylation of biotin on its carrier protein (BCCP) and then the CO(2) group is transferred by the carboxyltransferase to acetyl-CoA to form malonyl-CoA. The polypeptide is Acetyl-coenzyme A carboxylase carboxyl transferase subunit alpha (Gemmatimonas aurantiaca (strain DSM 14586 / JCM 11422 / NBRC 100505 / T-27)).